Reading from the N-terminus, the 318-residue chain is tRNA pseudouridine synthase B (318 aa).

Asp-47 (nucleophile) is an active-site residue.

This sequence belongs to the pseudouridine synthase TruB family. Type 1 subfamily.

The enzyme catalyses uridine(55) in tRNA = pseudouridine(55) in tRNA. Functionally, responsible for synthesis of pseudouridine from uracil-55 in the psi GC loop of transfer RNAs. The polypeptide is tRNA pseudouridine synthase B (Aliivibrio salmonicida (strain LFI1238) (Vibrio salmonicida (strain LFI1238))).